The chain runs to 434 residues: 4-hydroxy-3-methylbut-2-en-1-yl diphosphate synthase (flavodoxin) (434 aa).

A compositionally biased stretch (polar residues) spans 1-15 (MQSEAQSPRSSQICS). The tract at residues 1-24 (MQSEAQSPRSSQICSTEPVFGGHQ) is disordered. Residues Cys322, Cys325, Cys368, and Glu375 each coordinate [4Fe-4S] cluster.

It belongs to the IspG family. The cofactor is [4Fe-4S] cluster.

The catalysed reaction is (2E)-4-hydroxy-3-methylbut-2-enyl diphosphate + oxidized [flavodoxin] + H2O + 2 H(+) = 2-C-methyl-D-erythritol 2,4-cyclic diphosphate + reduced [flavodoxin]. The protein operates within isoprenoid biosynthesis; isopentenyl diphosphate biosynthesis via DXP pathway; isopentenyl diphosphate from 1-deoxy-D-xylulose 5-phosphate: step 5/6. Converts 2C-methyl-D-erythritol 2,4-cyclodiphosphate (ME-2,4cPP) into 1-hydroxy-2-methyl-2-(E)-butenyl 4-diphosphate. This Burkholderia ambifaria (strain MC40-6) protein is 4-hydroxy-3-methylbut-2-en-1-yl diphosphate synthase (flavodoxin).